The primary structure comprises 2237 residues: Activating signal cointegrator 1 complex subunit 3-like (2237 aa).

Disordered regions lie at residues 1 to 48 (MSEE…RGEM), 71 to 118 (TIEK…KPID), 242 to 330 (DEEE…SKLI), and 445 to 472 (EKTIEKTESNKKDVEMKQQQQQQQDEIK). Basic and acidic residues predominate over residues 24–37 (ERNRSELKEPKGEP). Polar residues predominate over residues 79–97 (VNSSNDTYSTTKKVKNQNP). Residues 105–114 (RKSNGNNNNE) show a composition bias toward low complexity. The segment covering 242–282 (DEEEEEENLSDFEIRDDDDDDDDVDNNEVDDNNNNDSEAQD) has biased composition (acidic residues). 2 stretches are compositionally biased toward basic and acidic residues: residues 312 to 325 (QKPDTKNTKDDKNN) and 446 to 460 (KTIEKTESNKKDVEM). Residues 440 to 468 (TAATTEKTIEKTESNKKDVEMKQQQQQQQ) adopt a coiled-coil conformation. Positions 561–745 (DCAFKTDNNL…FLRVEPDGVF (185 aa)) constitute a Helicase ATP-binding 1 domain. 574–581 (APTSSGKT) contributes to the ATP binding site. The DEAH box motif lies at 687–690 (DEIH). The region spanning 755 to 990 (PLEQQYIGIS…TVRDAVNWLG (236 aa)) is the Helicase C-terminal 1 domain. The SEC63 1 domain maps to 1050–1356 (STELGKVASH…GAEYSLPISF (307 aa)). The region spanning 1407–1584 (NCMYQSNDNA…WIGATPQTCY (178 aa)) is the Helicase ATP-binding 2 domain. Residue 1420–1427 (APTNSGKT) participates in ATP binding. The DEAH box signature appears at 1526–1529 (DELH). The Helicase C-terminal 2 domain occupies 1657-1832 (TLTKPYLVCE…TITKKQDALD (176 aa)). Residues 1892 to 2215 (PLNLGIIASY…GCDQEHELNI (324 aa)) enclose the SEC63 2 domain.

It belongs to the helicase family.

The chain is Activating signal cointegrator 1 complex subunit 3-like (ascc3l) from Dictyostelium discoideum (Social amoeba).